A 353-amino-acid polypeptide reads, in one-letter code: Photosystem II D2 protein (353 aa).

Thr2 is modified (N-acetylthreonine). Thr2 is modified (phosphothreonine). The helical transmembrane segment at 41 to 61 (CAYFALGGWFTGTTFVTSWYT) threads the bilayer. His118 provides a ligand contact to chlorophyll a. A helical membrane pass occupies residues 125–141 (GFMLRQFELARSVQLRP). Pheophytin a contacts are provided by Gln130 and Asn143. A helical transmembrane segment spans residues 153 to 166 (VFVSVFLIYPLGQS). His198 lines the chlorophyll a pocket. Residues 208–228 (AALLCAIHGATVENTLFEDGD) traverse the membrane as a helical segment. Positions 215 and 262 each coordinate a plastoquinone. His215 serves as a coordination point for Fe cation. His269 lines the Fe cation pocket. Residues 279-295 (GLWMSAIGVVGLALNLR) form a helical membrane-spanning segment.

This sequence belongs to the reaction center PufL/M/PsbA/D family. As to quaternary structure, PSII is composed of 1 copy each of membrane proteins PsbA, PsbB, PsbC, PsbD, PsbE, PsbF, PsbH, PsbI, PsbJ, PsbK, PsbL, PsbM, PsbT, PsbX, PsbY, PsbZ, Psb30/Ycf12, at least 3 peripheral proteins of the oxygen-evolving complex and a large number of cofactors. It forms dimeric complexes. The D1/D2 heterodimer binds P680, chlorophylls that are the primary electron donor of PSII, and subsequent electron acceptors. It shares a non-heme iron and each subunit binds pheophytin, quinone, additional chlorophylls, carotenoids and lipids. There is also a Cl(-1) ion associated with D1 and D2, which is required for oxygen evolution. The PSII complex binds additional chlorophylls, carotenoids and specific lipids. is required as a cofactor.

The protein localises to the plastid. The protein resides in the chloroplast thylakoid membrane. It carries out the reaction 2 a plastoquinone + 4 hnu + 2 H2O = 2 a plastoquinol + O2. Photosystem II (PSII) is a light-driven water:plastoquinone oxidoreductase that uses light energy to abstract electrons from H(2)O, generating O(2) and a proton gradient subsequently used for ATP formation. It consists of a core antenna complex that captures photons, and an electron transfer chain that converts photonic excitation into a charge separation. The D1/D2 (PsbA/PsbD) reaction center heterodimer binds P680, the primary electron donor of PSII as well as several subsequent electron acceptors. D2 is needed for assembly of a stable PSII complex. The chain is Photosystem II D2 protein from Drimys granadensis.